Consider the following 410-residue polypeptide: Peptidase T (410 aa).

Position 78 (His-78) interacts with Zn(2+). Residue Asp-80 is part of the active site. Asp-140 contributes to the Zn(2+) binding site. Residue Glu-174 is the Proton acceptor of the active site. Glu-175, Asp-197, and His-379 together coordinate Zn(2+).

The protein belongs to the peptidase M20B family. It depends on Zn(2+) as a cofactor.

It is found in the cytoplasm. It carries out the reaction Release of the N-terminal residue from a tripeptide.. Functionally, cleaves the N-terminal amino acid of tripeptides. This is Peptidase T from Vibrio cholerae serotype O1 (strain ATCC 39315 / El Tor Inaba N16961).